Consider the following 258-residue polypeptide: Imidazole glycerol phosphate synthase subunit HisF (258 aa).

Catalysis depends on residues aspartate 11 and aspartate 130.

It belongs to the HisA/HisF family. Heterodimer of HisH and HisF.

Its subcellular location is the cytoplasm. It catalyses the reaction 5-[(5-phospho-1-deoxy-D-ribulos-1-ylimino)methylamino]-1-(5-phospho-beta-D-ribosyl)imidazole-4-carboxamide + L-glutamine = D-erythro-1-(imidazol-4-yl)glycerol 3-phosphate + 5-amino-1-(5-phospho-beta-D-ribosyl)imidazole-4-carboxamide + L-glutamate + H(+). It functions in the pathway amino-acid biosynthesis; L-histidine biosynthesis; L-histidine from 5-phospho-alpha-D-ribose 1-diphosphate: step 5/9. In terms of biological role, IGPS catalyzes the conversion of PRFAR and glutamine to IGP, AICAR and glutamate. The HisF subunit catalyzes the cyclization activity that produces IGP and AICAR from PRFAR using the ammonia provided by the HisH subunit. This Salmonella agona (strain SL483) protein is Imidazole glycerol phosphate synthase subunit HisF.